Here is a 790-residue protein sequence, read N- to C-terminus: Spermatogenesis-associated protein 20 (790 aa).

A compositionally biased stretch (basic residues) spans 1-19 (MSHHSSPPPKHKGEHKGHG). Residues 1–67 (MSHHSSPPPK…PPPAPPKTVN (67 aa)) are disordered. Ser5 bears the Phosphoserine mark. Residues 23-36 (GSERGSSSRDKDRS) are compositionally biased toward basic and acidic residues. Ser653 is subject to Phosphoserine.

It is found in the secreted. Its function is as follows. May play a role in fertility regulation. In Mus musculus (Mouse), this protein is Spermatogenesis-associated protein 20 (Spata20).